We begin with the raw amino-acid sequence, 921 residues long: Isoleucine--tRNA ligase (921 aa).

Residues 57–67 (PYANGDIHMGH) carry the 'HIGH' region motif. Residue E552 coordinates L-isoleucyl-5'-AMP. The short motif at 593–597 (KMSKS) is the 'KMSKS' region element. K596 lines the ATP pocket. Residues C887, C890, C907, and C910 each contribute to the Zn(2+) site.

This sequence belongs to the class-I aminoacyl-tRNA synthetase family. IleS type 1 subfamily. Monomer. It depends on Zn(2+) as a cofactor.

The protein localises to the cytoplasm. It catalyses the reaction tRNA(Ile) + L-isoleucine + ATP = L-isoleucyl-tRNA(Ile) + AMP + diphosphate. Its function is as follows. Catalyzes the attachment of isoleucine to tRNA(Ile). As IleRS can inadvertently accommodate and process structurally similar amino acids such as valine, to avoid such errors it has two additional distinct tRNA(Ile)-dependent editing activities. One activity is designated as 'pretransfer' editing and involves the hydrolysis of activated Val-AMP. The other activity is designated 'posttransfer' editing and involves deacylation of mischarged Val-tRNA(Ile). This chain is Isoleucine--tRNA ligase, found in Halalkalibacterium halodurans (strain ATCC BAA-125 / DSM 18197 / FERM 7344 / JCM 9153 / C-125) (Bacillus halodurans).